Reading from the N-terminus, the 890-residue chain is Alanine--tRNA ligase (890 aa).

Zn(2+)-binding residues include His578, His582, Cys689, and His693.

The protein belongs to the class-II aminoacyl-tRNA synthetase family. Zn(2+) is required as a cofactor.

Its subcellular location is the cytoplasm. It carries out the reaction tRNA(Ala) + L-alanine + ATP = L-alanyl-tRNA(Ala) + AMP + diphosphate. Functionally, catalyzes the attachment of alanine to tRNA(Ala) in a two-step reaction: alanine is first activated by ATP to form Ala-AMP and then transferred to the acceptor end of tRNA(Ala). Also edits incorrectly charged Ser-tRNA(Ala) and Gly-tRNA(Ala) via its editing domain. This chain is Alanine--tRNA ligase, found in Deinococcus radiodurans (strain ATCC 13939 / DSM 20539 / JCM 16871 / CCUG 27074 / LMG 4051 / NBRC 15346 / NCIMB 9279 / VKM B-1422 / R1).